The following is a 620-amino-acid chain: NADPH-dependent diflavin oxidoreductase 1 (620 aa).

In terms of domain architecture, Flavodoxin-like spans 6–168; that stretch reads IAILYGSETG…VYSEFEKRVL (163 aa). Residues 12–17, 59–62, and 106–115 each bind FMN; these read SETGTA, STTG, and LGDSSYSKFN. The FAD-binding FR-type domain occupies 222-475; sequence SSVKYGTVVT…LLPAGKQDRP (254 aa). FAD contacts are provided by residues Arg-380, 410 to 413, and 442 to 445; these read RFFS and GLCT. 535–536 serves as a coordination point for NADP(+); sequence SR. An FAD-binding site is contributed by Trp-620.

This sequence belongs to the NADPH-dependent diflavin oxidoreductase NDOR1 family. In the N-terminal section; belongs to the flavodoxin family. It in the C-terminal section; belongs to the flavoprotein pyridine nucleotide cytochrome reductase family. Interacts with DRE2; as part of the cytosolic iron-sulfur (Fe-S) protein assembly (CIA) machinery. It depends on FAD as a cofactor. Requires FMN as cofactor.

It is found in the cytoplasm. The protein resides in the mitochondrion. It carries out the reaction 2 oxidized [2Fe-2S]-[protein] + NADPH = 2 reduced [2Fe-2S]-[protein] + NADP(+) + H(+). In terms of biological role, NADPH-dependent reductase which is a central component of the cytosolic iron-sulfur (Fe-S) protein assembly (CIA) machinery. Transfers electrons from NADPH via its FAD and FMN prosthetic groups to the [2Fe-2S] cluster of DRE2, another key component of the CIA machinery. In turn, this reduced cluster provides electrons for assembly of cytosolic iron-sulfur cluster proteins. Positively controls H(2)O(2)-induced cell death. The sequence is that of NADPH-dependent diflavin oxidoreductase 1 from Eremothecium gossypii (strain ATCC 10895 / CBS 109.51 / FGSC 9923 / NRRL Y-1056) (Yeast).